Here is a 538-residue protein sequence, read N- to C-terminus: Phosphoenolpyruvate carboxykinase (ATP) (538 aa).

Residues Arg64, Tyr206, and Lys212 each coordinate substrate. Residues Lys212, His231, and 247–255 (GLSGTGKTT) each bind ATP. The Mn(2+) site is built by Lys212 and His231. Residue Asp268 participates in Mn(2+) binding. ATP contacts are provided by residues Glu296, Arg332, 448–449 (RI), and Thr454. Residue Arg332 participates in substrate binding.

Belongs to the phosphoenolpyruvate carboxykinase (ATP) family. Monomer. It depends on Mn(2+) as a cofactor.

Its subcellular location is the cytoplasm. The catalysed reaction is oxaloacetate + ATP = phosphoenolpyruvate + ADP + CO2. Its pathway is carbohydrate biosynthesis; gluconeogenesis. Its function is as follows. Involved in the gluconeogenesis. Catalyzes the conversion of oxaloacetate (OAA) to phosphoenolpyruvate (PEP) through direct phosphoryl transfer between the nucleoside triphosphate and OAA. The polypeptide is Phosphoenolpyruvate carboxykinase (ATP) (Enterobacter sp. (strain 638)).